We begin with the raw amino-acid sequence, 341 residues long: Glycerol-3-phosphate dehydrogenase [NAD(P)+] (341 aa).

4 residues coordinate NADPH: Ser-15, Trp-16, Arg-36, and Lys-110. Sn-glycerol 3-phosphate-binding residues include Lys-110, Gly-139, and Ser-141. Position 143 (Ala-143) interacts with NADPH. Sn-glycerol 3-phosphate is bound by residues Lys-194, Asp-247, Ser-257, Arg-258, and Asn-259. The active-site Proton acceptor is Lys-194. Arg-258 is an NADPH binding site. Residues Val-282 and Glu-284 each coordinate NADPH.

The protein belongs to the NAD-dependent glycerol-3-phosphate dehydrogenase family.

It is found in the cytoplasm. It catalyses the reaction sn-glycerol 3-phosphate + NAD(+) = dihydroxyacetone phosphate + NADH + H(+). The enzyme catalyses sn-glycerol 3-phosphate + NADP(+) = dihydroxyacetone phosphate + NADPH + H(+). Its pathway is membrane lipid metabolism; glycerophospholipid metabolism. In terms of biological role, catalyzes the reduction of the glycolytic intermediate dihydroxyacetone phosphate (DHAP) to sn-glycerol 3-phosphate (G3P), the key precursor for phospholipid synthesis. The sequence is that of Glycerol-3-phosphate dehydrogenase [NAD(P)+] from Xanthomonas oryzae pv. oryzae (strain MAFF 311018).